The sequence spans 806 residues: Leucine--tRNA ligase (806 aa).

Residues 40–51 carry the 'HIGH' region motif; the sequence is PYPSGSGLHVGH. The 'KMSKS' region signature appears at 576–580; sequence KMSKS. Position 579 (Lys579) interacts with ATP.

The protein belongs to the class-I aminoacyl-tRNA synthetase family.

It localises to the cytoplasm. It carries out the reaction tRNA(Leu) + L-leucine + ATP = L-leucyl-tRNA(Leu) + AMP + diphosphate. The protein is Leucine--tRNA ligase of Chlorobium phaeobacteroides (strain BS1).